We begin with the raw amino-acid sequence, 133 residues long: Aspartate 1-decarboxylase (133 aa).

The Schiff-base intermediate with substrate; via pyruvic acid role is filled by Ser26. A Pyruvic acid (Ser) modification is found at Ser26. Thr58 serves as a coordination point for substrate. Residue Tyr59 is the Proton donor of the active site. Substrate is bound at residue Gly74–Ala76.

The protein belongs to the PanD family. As to quaternary structure, heterooctamer of four alpha and four beta subunits. It depends on pyruvate as a cofactor. Is synthesized initially as an inactive proenzyme, which is activated by self-cleavage at a specific serine bond to produce a beta-subunit with a hydroxyl group at its C-terminus and an alpha-subunit with a pyruvoyl group at its N-terminus.

It localises to the cytoplasm. It carries out the reaction L-aspartate + H(+) = beta-alanine + CO2. It functions in the pathway cofactor biosynthesis; (R)-pantothenate biosynthesis; beta-alanine from L-aspartate: step 1/1. Functionally, catalyzes the pyruvoyl-dependent decarboxylation of aspartate to produce beta-alanine. This Legionella pneumophila (strain Paris) protein is Aspartate 1-decarboxylase.